Here is a 350-residue protein sequence, read N- to C-terminus: Small ribosomal subunit biogenesis GTPase RsgA (350 aa).

The tract at residues 1–30 (MSKRKLTQNQQRRIQSNNAKTLHRHQHRHK) is disordered. Over residues 7–20 (TQNQQRRIQSNNAK) the composition is skewed to polar residues. Residues 21-30 (TLHRHQHRHK) are compositionally biased toward basic residues. Positions 106–274 (HNQIVRPDYY…LIDSPGIREF (169 aa)) constitute a CP-type G domain. Residues 162–165 (NKAD) and 216–224 (GQSGVGKSS) each bind GTP. Residues Cys-298, Cys-303, His-305, and Cys-311 each contribute to the Zn(2+) site.

It belongs to the TRAFAC class YlqF/YawG GTPase family. RsgA subfamily. Monomer. Associates with 30S ribosomal subunit, binds 16S rRNA. The cofactor is Zn(2+).

It is found in the cytoplasm. In terms of biological role, one of several proteins that assist in the late maturation steps of the functional core of the 30S ribosomal subunit. Helps release RbfA from mature subunits. May play a role in the assembly of ribosomal proteins into the subunit. Circularly permuted GTPase that catalyzes slow GTP hydrolysis, GTPase activity is stimulated by the 30S ribosomal subunit. The polypeptide is Small ribosomal subunit biogenesis GTPase RsgA (Histophilus somni (strain 129Pt) (Haemophilus somnus)).